We begin with the raw amino-acid sequence, 1604 residues long: Calmodulin-regulated spectrin-associated protein 1 (1604 aa).

S216 is modified (phosphoserine). In terms of domain architecture, Calponin-homology (CH) spans 235 to 350 (PVDFARVVRY…FIAELFWWFE (116 aa)). S390, S394, and S435 each carry phosphoserine. The disordered stretch occupies residues 394–413 (SPAAMSPADLPPSTQPLTEG). The tract at residues 444–491 (RQKQQKVSQAEEIPDQRHRSNSLTRADGQPRGAAIAWPDKKNRPVSQP) is disordered. A Phosphothreonine modification is found at T531. S571, S574, S581, S593, S607, S647, S739, S745, S755, and S757 each carry phosphoserine. The segment at 642-671 (MAKRPSEGSQPLVRKKVTGSHGSRDLNRTF) is disordered. A compositionally biased stretch (basic and acidic residues) spans 784–806 (EEESAKLQEDMKVKEHEDKDDAS). Disordered stretches follow at residues 784–824 (EEES…SMSM) and 842–888 (LNSC…KDPA). Low complexity-rich tracts occupy residues 813–824 (LSTTSQLSSMSM) and 847–858 (TKSSTSSSQKTT). Over residues 874-886 (QKREQSPSRHSKD) the composition is skewed to basic and acidic residues. The sufficient for interaction with SPTBN1 stretch occupies residues 888–909 (ASLLASELVQLHMQLEEKRRAI). Coiled coils occupy residues 890-926 (LLAS…QRLK) and 1026-1058 (DVNE…QEQL). The segment at 920–939 (SARQRLKLGKAAFLHVVKKG) is sufficient for interaction with calmodulin. 3 disordered regions span residues 1085–1163 (FVEP…GELP), 1246–1271 (PDED…KPGV), and 1298–1448 (RKAE…DRDW). Phosphoserine is present on S1090. A compositionally biased stretch (basic and acidic residues) spans 1113 to 1124 (RPAELKVPKDRQ). The segment covering 1125-1137 (QGCSRSKTPTPSV) has biased composition (polar residues). A Phosphoserine modification is found at S1154. Composition is skewed to basic and acidic residues over residues 1246–1258 (PDED…HESS) and 1298–1348 (RKAE…EYLR). The stretch at 1286–1357 (AKKRAAFLLK…RRKQQQALEE (72 aa)) forms a coiled coil. The span at 1363-1374 (PKSKPKKPRPKS) shows a compositional bias: basic residues. Residues 1382-1394 (SDSGTKCSSTPDN) show a composition bias toward polar residues. Residues 1395-1412 (LSQTHSGSSLSLASAATT) are compositionally biased toward low complexity. S1400 and S1429 each carry phosphoserine. In terms of domain architecture, CKK spans 1465 to 1599 (GPKLFKEPSS…QPKRPTVPKK (135 aa)). Phosphotyrosine is present on Y1539.

Belongs to the CAMSAP1 family. As to quaternary structure, interacts with spectrin via SPTBN1; the interaction is direct. Interacts with calmodulin; calcium-dependent it prevents interaction with spectrin. In terms of tissue distribution, in brain, specifically expressed in astrocytes (at protein level).

It localises to the cytoplasm. The protein localises to the cytoskeleton. Key microtubule-organizing protein that specifically binds the minus-end of non-centrosomal microtubules and regulates their dynamics and organization. Specifically recognizes growing microtubule minus-ends and stabilizes microtubules. Acts on free microtubule minus-ends that are not capped by microtubule-nucleating proteins or other factors and protects microtubule minus-ends from depolymerization. In contrast to CAMSAP2 and CAMSAP3, tracks along the growing tips of minus-end microtubules without significantly affecting the polymerization rate: binds at the very tip of the microtubules minus-end and acts as a minus-end tracking protein (-TIP) that dissociates from microtubules after allowing tubulin incorporation. Through interaction with spectrin may regulate neurite outgrowth. The chain is Calmodulin-regulated spectrin-associated protein 1 (Camsap1) from Rattus norvegicus (Rat).